The sequence spans 183 residues: Phosphopantetheine adenylyltransferase (183 aa).

T13 contacts substrate. ATP is bound by residues 13–14 and H21; that span reads TF. Positions 45, 81, and 95 each coordinate substrate. Residues 96 to 98, E106, and 131 to 137 contribute to the ATP site; these read GLR and HQFISSR.

This sequence belongs to the bacterial CoaD family. As to quaternary structure, homohexamer. Requires Mg(2+) as cofactor.

Its subcellular location is the cytoplasm. It carries out the reaction (R)-4'-phosphopantetheine + ATP + H(+) = 3'-dephospho-CoA + diphosphate. The protein operates within cofactor biosynthesis; coenzyme A biosynthesis; CoA from (R)-pantothenate: step 4/5. In terms of biological role, reversibly transfers an adenylyl group from ATP to 4'-phosphopantetheine, yielding dephospho-CoA (dPCoA) and pyrophosphate. This Rhodospirillum centenum (strain ATCC 51521 / SW) protein is Phosphopantetheine adenylyltransferase.